Reading from the N-terminus, the 303-residue chain is Acetylglutamate kinase (303 aa).

Substrate-binding positions include 76–77, Arg-98, and Asn-199; that span reads GG.

It belongs to the acetylglutamate kinase family. ArgB subfamily.

Its subcellular location is the cytoplasm. The enzyme catalyses N-acetyl-L-glutamate + ATP = N-acetyl-L-glutamyl 5-phosphate + ADP. It participates in amino-acid biosynthesis; L-arginine biosynthesis; N(2)-acetyl-L-ornithine from L-glutamate: step 2/4. Catalyzes the ATP-dependent phosphorylation of N-acetyl-L-glutamate. This is Acetylglutamate kinase from Clavibacter sepedonicus (Clavibacter michiganensis subsp. sepedonicus).